The following is a 393-amino-acid chain: MQQTKKLTHSDITIAVMSGPFLQRGEPALVSKWYRTKMALACGVDLVVELPYAFSTQKAETFANGAISILNALHVSEICFGSEDGQIENFYNTISVQKNEEETFNRLVKQFMNAGNSYAKATSEAFLHILSSEKNIDMSQPNNILGFQYIKAILMQNSSMQAQTIKRFASHYHDETFNDQHIASATSIRKQLFSENSSFTEIESFIPKATASLLASYKQNYGTLHNWEQYFSFFKYKLMTMSPENLRHIYEIEEGLEHRILSKIQTSSSFHSFMESLKTKRYTWTRLQRACTHILTNTTKEEIYCANIEQHAPYIRLLGMSQKGQTYLSKNKKKIELPILTHTKTFDHPTLHIERKANSVYFSIMKEPLRTQLLKRDATHHPIRYDETTAKFL.

3 residues coordinate ATP: glycine 81, asparagine 142, and arginine 167.

Belongs to the TmcAL family.

It localises to the cytoplasm. The enzyme catalyses cytidine(34) in elongator tRNA(Met) + acetate + ATP = N(4)-acetylcytidine(34) in elongator tRNA(Met) + AMP + diphosphate. Its function is as follows. Catalyzes the formation of N(4)-acetylcytidine (ac(4)C) at the wobble position of elongator tRNA(Met), using acetate and ATP as substrates. First activates an acetate ion to form acetyladenylate (Ac-AMP) and then transfers the acetyl group to tRNA to form ac(4)C34. In Bacillus anthracis (strain A0248), this protein is tRNA(Met) cytidine acetate ligase.